The sequence spans 500 residues: MVLFHSQASCCKRVKADAIVLPFWQVQDKVRCAASIVEEYEPLYQVALENFAGKTGEAELIYSYGQGKEKRILLLGLGKNEELSSQDVLEAYAKATRILRKAKCTTVNIVLPVISELRISAEDFLSNLTSGILSLNYNYPKYTKECQSSEPLLTKVTVLGIVPKIADRIFRKEESIFEGVYLTRDLVNGNADEVTPQKLANIAKGLAKEFPSVDAKILNKDAILKEKMGLLAAVAKGSAVDPCFIVLSYQGKPKSKDHTVLIGKGVTFDSGGLDLKPGKAMLTMKEDMAGAATALGILSGVAALELPVNVTAIIPATENAIDGASYKMGDVYIGMSGLSVEIGSTDAEGRLILADAITYALKYCKPTRIIDFATLTGAMVVSLGESVAGFFSNNDVLAQDLSEASAETGEALWRLPLVEKYDKALQSDIADMKNIGSNRAGAITAALFLRRFLEDQPVAWAHLDIAGTAYREKDEDPYPKYASGFGVRCLIYYIEKFLSK.

Residues Lys264 and Asp269 each contribute to the Mn(2+) site. Lys276 is a catalytic residue. Residues Asp287, Asp346, and Glu348 each coordinate Mn(2+). Arg350 is an active-site residue.

It belongs to the peptidase M17 family. Mn(2+) is required as a cofactor.

It is found in the cytoplasm. The enzyme catalyses Release of an N-terminal amino acid, Xaa-|-Yaa-, in which Xaa is preferably Leu, but may be other amino acids including Pro although not Arg or Lys, and Yaa may be Pro. Amino acid amides and methyl esters are also readily hydrolyzed, but rates on arylamides are exceedingly low.. It catalyses the reaction Release of an N-terminal amino acid, preferentially leucine, but not glutamic or aspartic acids.. Its function is as follows. Presumably involved in the processing and regular turnover of intracellular proteins. Catalyzes the removal of unsubstituted N-terminal amino acids from various peptides. This Chlamydia felis (strain Fe/C-56) (Chlamydophila felis) protein is Probable cytosol aminopeptidase.